We begin with the raw amino-acid sequence, 256 residues long: Spore coat polysaccharide biosynthesis protein SpsA (256 aa).

Cys-155 and Cys-243 are oxidised to a cystine. The active site involves Asp-191.

The protein belongs to the glycosyltransferase 2 family. In terms of assembly, monomer in solution.

It participates in spore coat biogenesis; spore coat polysaccharide biosynthesis. Glycosyltransferase implicated in the synthesis of the spore coat. In Bacillus subtilis (strain 168), this protein is Spore coat polysaccharide biosynthesis protein SpsA (spsA).